We begin with the raw amino-acid sequence, 496 residues long: Lysine--tRNA ligase (496 aa).

Mg(2+)-binding residues include Glu409 and Glu416.

This sequence belongs to the class-II aminoacyl-tRNA synthetase family. As to quaternary structure, homodimer. Mg(2+) serves as cofactor.

It localises to the cytoplasm. It carries out the reaction tRNA(Lys) + L-lysine + ATP = L-lysyl-tRNA(Lys) + AMP + diphosphate. The sequence is that of Lysine--tRNA ligase from Streptococcus suis (strain 05ZYH33).